We begin with the raw amino-acid sequence, 268 residues long: Undecaprenyl-diphosphatase (268 aa).

Transmembrane regions (helical) follow at residues 47–67, 83–103, 109–129, 144–164, 184–204, 218–238, and 246–266; these read FAILIQLGAILAIVALYFFKL, FIIGVLIAFLPAVIIGLIAGK, LFDPWVVCFSLIVGGAILLWV, YPLLMYLWIGVAQCLAMIPGV, AAEFSFFLAIPTMVGAFVYDF, LVAIGFVVSFITAMIVVKAFL, and FVLFAWWRVIVGTLGLIALAL.

Belongs to the UppP family.

The protein localises to the cell inner membrane. The enzyme catalyses di-trans,octa-cis-undecaprenyl diphosphate + H2O = di-trans,octa-cis-undecaprenyl phosphate + phosphate + H(+). Functionally, catalyzes the dephosphorylation of undecaprenyl diphosphate (UPP). Confers resistance to bacitracin. The protein is Undecaprenyl-diphosphatase of Bradyrhizobium sp. (strain BTAi1 / ATCC BAA-1182).